We begin with the raw amino-acid sequence, 190 residues long: Lipid A acyltransferase PagP (190 aa).

Residues 1–24 (MNRYLLTTLSAPLLALFFSFSLQA) form the signal peptide. Residues His62, Asp105, and Ser106 contribute to the active site.

Belongs to the lipid A palmitoyltransferase family. Homodimer.

It is found in the cell outer membrane. The catalysed reaction is a lipid A + a 1,2-diacyl-sn-glycero-3-phosphocholine = a hepta-acyl lipid A + a 2-acyl-sn-glycero-3-phosphocholine. It catalyses the reaction a lipid IVA + a 1,2-diacyl-sn-glycero-3-phosphocholine = a lipid IVB + a 2-acyl-sn-glycero-3-phosphocholine. The enzyme catalyses a lipid IIA + a 1,2-diacyl-sn-glycero-3-phosphocholine = a lipid IIB + a 2-acyl-sn-glycero-3-phosphocholine. Functionally, transfers a fatty acid residue from the sn-1 position of a phospholipid to the N-linked hydroxyfatty acid chain on the proximal unit of lipid A or its precursors. The sequence is that of Lipid A acyltransferase PagP from Pantoea ananatis (strain LMG 20103).